We begin with the raw amino-acid sequence, 172 residues long: Type IV secretion system putative outer membrane lipoprotein BAB2_0057 (172 aa).

The N-terminal stretch at 1-15 (MRTLVMVACAVSLAA) is a signal peptide. Cys-16 carries N-palmitoyl cysteine lipidation. A lipid anchor (S-diacylglycerol cysteine) is attached at Cys-16. Residues 58-172 (WPARPPKQTV…RRVDIEILRK (115 aa)) form the OmpA-like domain.

The protein resides in the cell outer membrane. The virB operon is essential for intracellular survival and is not involved in the invasion process. Constitutes a major determinant of virulence in mice. This protein is essential for pathogenesis in mice but is not required for intracellular survival. This Brucella abortus (strain 2308) protein is Type IV secretion system putative outer membrane lipoprotein BAB2_0057.